Reading from the N-terminus, the 708-residue chain is Wall-associated receptor kinase-like 14 (708 aa).

A signal peptide spans 1–42 (MLRSIFDFNQRSTKMVMISHKLDLILVFIIVIGGSIFRRVSA). Residues N43, N88, N101, N131, N158, N167, and N184 are each glycosylated (N-linked (GlcNAc...) asparagine). The Extracellular segment spans residues 43–285 (NFTVPCNGRC…WRHCRSNLIT (243 aa)). A helical membrane pass occupies residues 286–306 (IVGGTVGGAFLLAALAFFFFC). Over 307–708 (KRRRSTPLRS…TNTLLGNIPR (402 aa)) the chain is Cytoplasmic. Residues 348 to 629 (FSEKQKLGIG…LEQIRLSGWI (282 aa)) enclose the Protein kinase domain. Residues 354 to 362 (LGIGAYGTV) and K376 contribute to the ATP site. The active-site Proton acceptor is the D472. 2 disordered regions span residues 636-659 (SPAGSLRSSDRGSERSVKQSSIGS) and 686-708 (VQDPWLSAQSSPSTNTLLGNIPR). Basic and acidic residues predominate over residues 643 to 652 (SSDRGSERSV). The segment covering 692–708 (SAQSSPSTNTLLGNIPR) has biased composition (polar residues).

It belongs to the protein kinase superfamily. Ser/Thr protein kinase family.

It is found in the membrane. It carries out the reaction L-seryl-[protein] + ATP = O-phospho-L-seryl-[protein] + ADP + H(+). It catalyses the reaction L-threonyl-[protein] + ATP = O-phospho-L-threonyl-[protein] + ADP + H(+). Functionally, serine/threonine-protein kinase that may function as a signaling receptor of extracellular matrix component. This Arabidopsis thaliana (Mouse-ear cress) protein is Wall-associated receptor kinase-like 14 (WAKL14).